The primary structure comprises 600 residues: Aspartate--tRNA ligase (600 aa).

Glu-175 contacts L-aspartate. The aspartate stretch occupies residues 199-202; that stretch reads QLFK. Arg-221 is a binding site for L-aspartate. ATP-binding positions include 221-223 and Gln-230; that span reads RDE. Residue His-448 coordinates L-aspartate. Glu-484 is a binding site for ATP. Arg-491 is an L-aspartate binding site. 536–539 lines the ATP pocket; that stretch reads GLDR.

Belongs to the class-II aminoacyl-tRNA synthetase family. Type 1 subfamily. Homodimer.

It is found in the cytoplasm. It catalyses the reaction tRNA(Asp) + L-aspartate + ATP = L-aspartyl-tRNA(Asp) + AMP + diphosphate. Functionally, catalyzes the attachment of L-aspartate to tRNA(Asp) in a two-step reaction: L-aspartate is first activated by ATP to form Asp-AMP and then transferred to the acceptor end of tRNA(Asp). The protein is Aspartate--tRNA ligase of Limosilactobacillus reuteri (strain DSM 20016) (Lactobacillus reuteri).